A 215-amino-acid polypeptide reads, in one-letter code: Sodium channel regulatory subunit beta-3 (215 aa).

The first 24 residues, 1–24, serve as a signal peptide directing secretion; sequence MPAFNRLLPLASLVLIYWVRVCFP. Residues 25 to 138 enclose the Ig-like C2-type domain; it reads VCVEVPSETE…EAHRPFVKTT (114 aa). At 25–156 the chain is on the extracellular side; the sequence is VCVEVPSETE…EEAGEDFTSV (132 aa). 2 cysteine pairs are disulfide-bonded: cysteine 26–cysteine 48 and cysteine 45–cysteine 120. 4 N-linked (GlcNAc...) asparagine glycosylation sites follow: asparagine 95, asparagine 109, asparagine 113, and asparagine 121. A helical membrane pass occupies residues 157–178; sequence VSEIMMYILLVFLTLWLFIEMI. The Cytoplasmic portion of the chain corresponds to 179-215; sequence YCYRKVSKAEEAAQENASDYLAIPSENKENSVVPVEE.

It belongs to the sodium channel auxiliary subunit SCN3B (TC 8.A.17) family. A voltage-gated sodium (Nav) channel consists of an ion-conducting pore-forming alpha subunit functional on its own that is regulated by one or more beta subunits. Forms homodimers and homotrimers. SCN3B is non-covalently associated with alpha subunits and induces the formation of alpha subunit oligomers, including trimers. Interacts with SCN5A/Nav1.5; regulatory subunit of SCN5A/Nav1.5. Interacts with SCN7A/Nav2.1; probable regulatory subunit of SCN7A/Nav2.1. Interacts with SCN10A; regulatory subunit of SCN10A/Nav1.8. Interacts with NFASC; probably involved in targeting the sodium channels to the nodes of Ranvier. In terms of processing, intramolecular disulfide bonds favor the voltage-gated sodium channel oligomeric complex assembly. Post-translationally, N-glycosylated. In terms of tissue distribution, expressed broadly in neurons in the central and peripheral nervous systems, but not in glia and most non-neuronal cells. Weak detection in lung and adrenal gland.

Its subcellular location is the cell membrane. In terms of biological role, regulatory subunit of multiple voltage-gated sodium (Nav) channels directly mediating the depolarization of excitable membranes. Navs, also called VGSCs (voltage-gated sodium channels) or VDSCs (voltage-dependent sodium channels), operate by switching between closed and open conformations depending on the voltage difference across the membrane. In the open conformation they allow Na(+) ions to selectively pass through the pore, along their electrochemical gradient. The influx of Na+ ions provokes membrane depolarization, initiating the propagation of electrical signals throughout cells and tissues. The accessory beta subunits participate in localization and functional modulation of the Nav channels. Voltage-gated sodium channels regulatory subunit that modulates channel gating kinetics. Modulates the activity of SCN2A/Nav1.2, causing a hyperpolarizing shift in the voltage-dependence of inactivation and increasing the fraction of channels operating in the fast gating mode. Also able to induce unique persistent SCN2A/Nav1.2-mediated sodium currents. Could modulate the activity of SCN10A/Nav1.8. The sequence is that of Sodium channel regulatory subunit beta-3 from Rattus norvegicus (Rat).